Reading from the N-terminus, the 345-residue chain is Glycerol-3-phosphate dehydrogenase [NAD(P)+] (345 aa).

Positions 11, 12, 32, 33, and 106 each coordinate NADPH. Positions 106, 137, and 139 each coordinate sn-glycerol 3-phosphate. Ala-141 lines the NADPH pocket. Residues Lys-192, Asp-245, Ser-255, Arg-256, and Asn-257 each contribute to the sn-glycerol 3-phosphate site. Residue Lys-192 is the Proton acceptor of the active site. Arg-256 serves as a coordination point for NADPH. Val-280 and Glu-282 together coordinate NADPH.

Belongs to the NAD-dependent glycerol-3-phosphate dehydrogenase family.

It localises to the cytoplasm. The catalysed reaction is sn-glycerol 3-phosphate + NAD(+) = dihydroxyacetone phosphate + NADH + H(+). It carries out the reaction sn-glycerol 3-phosphate + NADP(+) = dihydroxyacetone phosphate + NADPH + H(+). It participates in membrane lipid metabolism; glycerophospholipid metabolism. Its function is as follows. Catalyzes the reduction of the glycolytic intermediate dihydroxyacetone phosphate (DHAP) to sn-glycerol 3-phosphate (G3P), the key precursor for phospholipid synthesis. This Bacillus pumilus (strain SAFR-032) protein is Glycerol-3-phosphate dehydrogenase [NAD(P)+].